Reading from the N-terminus, the 156-residue chain is Small ribosomal subunit protein uS7 (156 aa).

Belongs to the universal ribosomal protein uS7 family. In terms of assembly, part of the 30S ribosomal subunit. Contacts proteins S9 and S11.

Its function is as follows. One of the primary rRNA binding proteins, it binds directly to 16S rRNA where it nucleates assembly of the head domain of the 30S subunit. Is located at the subunit interface close to the decoding center, probably blocks exit of the E-site tRNA. The sequence is that of Small ribosomal subunit protein uS7 from Agrobacterium fabrum (strain C58 / ATCC 33970) (Agrobacterium tumefaciens (strain C58)).